Consider the following 158-residue polypeptide: Small ribosomal subunit protein uS7 (158 aa).

This sequence belongs to the universal ribosomal protein uS7 family. Part of the 30S ribosomal subunit. Contacts proteins S9 and S11.

One of the primary rRNA binding proteins, it binds directly to 16S rRNA where it nucleates assembly of the head domain of the 30S subunit. Is located at the subunit interface close to the decoding center, probably blocks exit of the E-site tRNA. The protein is Small ribosomal subunit protein uS7 of Azobacteroides pseudotrichonymphae genomovar. CFP2.